We begin with the raw amino-acid sequence, 1841 residues long: Cell division control protein 12 (1841 aa).

Polar residues-rich tracts occupy residues M1–A25 and S46–T63. Disordered regions lie at residues M1–T63, N78–L134, and P152–H181. The 389-residue stretch at T232–N620 folds into the GBD/FH3 domain. Positions L674–H715 form a coiled coil. Residues G740 to S972 enclose the FH1 domain. Positions T980–N1391 constitute an FH2 domain. Positions T1260–S1290 form a coiled coil. Disordered stretches follow at residues E1445–L1661, T1696–I1715, and K1735–K1758. 2 stretches are compositionally biased toward polar residues: residues P1447–A1456 and S1483–P1497. Positions K1499–R1516 are enriched in basic and acidic residues. Residues G1539–E1553 show a composition bias toward polar residues. Phosphoserine is present on S1541. Y1544 is subject to Phosphotyrosine. Positions D1554 to R1567 are enriched in basic and acidic residues. Residues R1568 to S1577 show a composition bias toward basic residues. Positions I1594–K1604 are enriched in polar residues. Basic and acidic residues predominate over residues P1605–V1621. The span at N1630–R1641 shows a compositional bias: polar residues.

It belongs to the formin homology family. BNI1 subfamily. As to quaternary structure, interacts with profilin and actin at the FH1 and FH2 domains respectively.

The protein resides in the nucleus. Plays a role in the cell cycle. Involved in cytokinesis. Component of the cell division ring. In the absence of profilin, caps the barbed end of actin filaments, thus preventing subunit addition and dissociation. In the presence of profilin, nucleates actin filaments that grow rapidly from their barbed ends. This chain is Cell division control protein 12 (cdc12), found in Schizosaccharomyces pombe (strain 972 / ATCC 24843) (Fission yeast).